Here is a 324-residue protein sequence, read N- to C-terminus: mRNA decay activator protein ZFP36 (324 aa).

A necessary for nuclear export region spans residues 1–15 (MDLAAIYKSLLSLSP). Residues 1–98 (MDLAAIYKSL…PTSPTATPTT (98 aa)) are necessary and sufficient for the association with mRNA decay enzymes and mRNA decay activation. 2 necessary for localization of ARE-containing mRNAs to processing bodies (PBs) regions span residues 1 to 172 (MDLA…DLAA) and 98 to 324 (TSSR…SVSE). The span at 15–46 (PELPSDLGETESSTSWASSGPWSLSSSDSSLP) shows a compositional bias: low complexity. The disordered stretch occupies residues 15–50 (PELPSDLGETESSTSWASSGPWSLSSSDSSLPEVAA). Phosphoserine; by MAPKAPK2 is present on Ser58. At Ser64 the chain carries Phosphoserine. One copy of the P-P-P-P-G repeat lies at 69–73 (PPPPG). Residues 76–100 (PLAPRPSSDWSPSPTSPTATPTTSS) are disordered. 2 positions are modified to phosphoserine: Ser86 and Ser88. Thr90 is subject to Phosphothreonine. Ser91 is subject to Phosphoserine. The necessary for nuclear localization stretch occupies residues 93–166 (TATPTTSSRY…GSRCHFIHNP (74 aa)). Positions 95–171 (TPTTSSRYKT…FIHNPSEDLA (77 aa)) are necessary for RNA-binding. C3H1-type zinc fingers lie at residues 101–129 (RYKTELCRTFSESGRCRYGAKCQFAHGLG) and 139–167 (KYKTELCHKFYLQGRCPYGSRCHFIHNPS). The necessary for interaction with PABPN1 stretch occupies residues 101-192 (RYKTELCRTF…ISFSGLPSGR (92 aa)). Ser167 is modified (phosphoserine). The interval 172–324 (APGHPHVLRQ…PIFNRISVSE (153 aa)) is necessary for mRNA decay activation. Position 184 is a phosphoserine; by MAPKAPK2 (Ser184). Disordered regions lie at residues 185-227 (FSGL…LLLS) and 270-324 (PSAH…SVSE). Phosphoserine is present on Ser195. Residues 196-200 (PPPAS) form a P-P-P-P-G repeat. A compositionally biased stretch (low complexity) spans 204–214 (PSVSSWSFSPS). Ser216 is subject to Phosphoserine. A P-P-P-P-G repeat occupies 218–222 (PPPPG). The residue at position 227 (Ser227) is a Phosphoserine; by MAPK1; in vitro. Phosphoserine is present on residues Ser274, Ser294, and Ser321. The interaction with CNOT1 stretch occupies residues 310 to 324 (APRRLPIFNRISVSE).

In terms of assembly, associates with cytoplasmic CCR4-NOT and PAN2-PAN3 deadenylase complexes to trigger ARE-containing mRNA deadenylation and decay processes. Part of a mRNA decay activation complex at least composed of poly(A)-specific exoribonucleases CNOT6, EXOSC2 and XRN1 and mRNA-decapping enzymes DCP1A and DCP2. Associates with the RNA exosome complex. Interacts (via phosphorylated form) with 14-3-3 proteins; these interactions promote exclusion of ZFP36 from cytoplasmic stress granules in response to arsenite treatment in a MAPKAPK2-dependent manner and does not prevent CCR4-NOT deadenylase complex recruitment or ZFP36-induced ARE-containing mRNA deadenylation and decay processes. Interacts with 14-3-3 proteins; these interactions occur in response to rapamycin in an Akt-dependent manner. Interacts with AGO2 and AGO4. Interacts (via C-terminus) with CNOT1; this interaction occurs in a RNA-independent manner and induces mRNA deadenylation. Interacts (via N-terminus) with CNOT6. Interacts with CNOT6L. Interacts (via C-terminus) with CNOT7; this interaction occurs in a RNA-independent manner, induces mRNA deadenylation and is inhibited in a phosphorylation MAPKAPK2-dependent manner. Interacts (via unphosphorylated form) with CNOT8; this interaction occurs in a RNA-independent manner and is inhibited in a phosphorylation MAPKAPK2-dependent manner. Interacts with DCP1A. Interacts (via N-terminus) with DCP2. Interacts with EDC3. Interacts (via N-terminus) with EXOSC2. Interacts with heat shock 70 kDa proteins. Interacts with KHSRP; this interaction increases upon cytokine-induced treatment. Interacts with MAP3K4; this interaction enhances the association with SH3KBP1/CIN85. Interacts with MAPKAPK2; this interaction occurs upon skeletal muscle satellite cell activation. Interacts with NCL. Interacts with NUP214; this interaction increases upon lipopolysaccharide (LPS) stimulation. Interacts with PABPC1; this interaction occurs in a RNA-dependent manner. Interacts (via hypophosphorylated form) with PABPN1 (via RRM domain and C-terminal arginine-rich region); this interaction occurs in the nucleus in a RNA-independent manner, decreases in presence of single-stranded poly(A) RNA-oligomer and in a p38 MAPK-dependent-manner and inhibits nuclear poly(A) tail synthesis. Interacts with PAN2. Interacts (via C3H1-type zinc finger domains) with PKM. Interacts (via C3H1-type zinc finger domains) with nuclear RNA poly(A) polymerase. Interacts with PPP2CA; this interaction occurs in LPS-stimulated cells and induces ZFP36 dephosphorylation, and hence may promote ARE-containing mRNAs decay. Interacts (via C-terminus) with PRR5L (via C-terminus); this interaction may accelerate ZFP36-mediated mRNA decay during stress. Interacts (via C-terminus) with SFN; this interaction occurs in a phosphorylation-dependent manner. Interacts (via extreme C-terminal region) with SH3KBP1/CIN85 (via SH3 domains); this interaction enhances MAP3K4-induced phosphorylation of ZFP36 at Ser-64 and Ser-91 and does not alter neither ZFP36 binding to ARE-containing transcripts nor TNF-alpha mRNA decay. Interacts with XRN1. Interacts (via C-terminus and Ser-184 phosphorylated form) with YWHAB; this interaction occurs in a p38/MAPKAPK2-dependent manner, increases cytoplasmic localization of ZFP36 and protects ZFP36 from Ser-184 dephosphorylation by serine/threonine phosphatase 2A, and hence may be crucial for stabilizing ARE-containing mRNAs. Interacts (via phosphorylated form) with YWHAE. Interacts (via C-terminus) with YWHAG; this interaction occurs in a phosphorylation-dependent manner. Interacts with YWHAH; this interaction occurs in a phosphorylation-dependent manner. Interacts with YWHAQ; this interaction occurs in a phosphorylation-dependent manner. Interacts with (via C-terminus) YWHAZ; this interaction occurs in a phosphorylation-dependent manner. Does not interact with SH3KBP1. Interacts (via P-P-P-P-G repeats) with GIGYF2; the interaction is direct. Phosphorylated. Phosphorylation at serine and/or threonine residues occurs in a p38 MAPK- and MAPKAPK2-dependent manner. Phosphorylated by MAPKAPK2 at Ser-58 and Ser-184; phosphorylation increases its stability and cytoplasmic localization, promotes binding to 14-3-3 adapter proteins and inhibits the recruitment of cytoplasmic CCR4-NOT and PAN2-PAN3 deadenylase complexes to the mRNA decay machinery, thereby inhibiting ZFP36-induced ARE-containing mRNA deadenylation and decay processes. Phosphorylation by MAPKAPK2 does not impair ARE-containing RNA-binding. Phosphorylated in a MAPKAPK2- and p38 MAPK-dependent manner upon skeletal muscle satellite cell activation; this phosphorylation inhibits ZFP36-mediated mRNA decay activity, and hence stabilizes MYOD1 mRNA. Phosphorylated by MAPK1 upon mitogen stimulation. Phosphorylated at Ser-64 and Ser-91; these phosphorylations increase in a SH3KBP1-dependent manner. Phosphorylated at serine and threonine residues in a pyruvate kinase PKM- and p38 MAPK-dependent manner. Phosphorylation at Ser-58 may participate in the PKM-mediated degradation of ZFP36 in a p38 MAPK-dependent manner. Dephosphorylated by serine/threonine phosphatase 2A at Ser-184. Post-translationally, ubiquitinated; pyruvate kinase (PKM)-dependent ubiquitination leads to proteasomal degradation through a p38 MAPK signaling pathway.

The protein localises to the nucleus. The protein resides in the cytoplasm. It localises to the cytoplasmic granule. It is found in the P-body. Functionally, zinc-finger RNA-binding protein that destabilizes numerous cytoplasmic AU-rich element (ARE)-containing mRNA transcripts by promoting their poly(A) tail removal or deadenylation, and hence provide a mechanism for attenuating protein synthesis. Acts as an 3'-untranslated region (UTR) ARE mRNA-binding adapter protein to communicate signaling events to the mRNA decay machinery. Recruits deadenylase CNOT7 (and probably the CCR4-NOT complex) via association with CNOT1, and hence promotes ARE-mediated mRNA deadenylation. Also functions by recruiting components of the cytoplasmic RNA decay machinery to the bound ARE-containing mRNAs. Self regulates by destabilizing its own mRNA. Binds to 3'-UTR ARE of numerous mRNAs. Also binds to ARE of its own mRNA. Plays a role in anti-inflammatory responses; suppresses tumor necrosis factor (TNF)-alpha production by stimulating ARE-mediated TNF-alpha mRNA decay and several other inflammatory ARE-containing mRNAs in interferon (IFN)- and/or lipopolysaccharide (LPS)-induced macrophages. Also plays a role in the regulation of dendritic cell maturation at the post-transcriptional level, and hence operates as part of a negative feedback loop to limit the inflammatory response. Promotes ARE-mediated mRNA decay of hypoxia-inducible factor HIF1A mRNA during the response of endothelial cells to hypoxia. Positively regulates early adipogenesis of preadipocytes by promoting ARE-mediated mRNA decay of immediate early genes (IEGs). Negatively regulates hematopoietic/erythroid cell differentiation by promoting ARE-mediated mRNA decay of the transcription factor STAT5B mRNA. Plays a role in maintaining skeletal muscle satellite cell quiescence by promoting ARE-mediated mRNA decay of the myogenic determination factor MYOD1 mRNA. Also associates with and regulates the expression of non-ARE-containing target mRNAs at the post-transcriptional level, such as MHC class I mRNAs. Participates in association with argonaute RISC catalytic components in the ARE-mediated mRNA decay mechanism; assists microRNA (miRNA) targeting ARE-containing mRNAs. May also play a role in the regulation of cytoplasmic mRNA decapping; enhances decapping of ARE-containing RNAs, in vitro. Involved in the delivery of target ARE-mRNAs to processing bodies (PBs). In addition to its cytosolic mRNA-decay function, affects nuclear pre-mRNA processing. Negatively regulates nuclear poly(A)-binding protein PABPN1-stimulated polyadenylation activity on ARE-containing pre-mRNA during LPS-stimulated macrophages. Also involved in the regulation of stress granule (SG) and P-body (PB) formation and fusion. Plays a role in the regulation of keratinocyte proliferation, differentiation and apoptosis. Plays a role as a tumor suppressor by inhibiting cell proliferation in breast cancer cells. The protein is mRNA decay activator protein ZFP36 of Bos taurus (Bovine).